The following is a 197-amino-acid chain: 7-methyl-GTP pyrophosphatase (197 aa).

Catalysis depends on Asp74, which acts as the Proton acceptor.

It belongs to the Maf family. YceF subfamily. A divalent metal cation serves as cofactor.

It is found in the cytoplasm. It catalyses the reaction N(7)-methyl-GTP + H2O = N(7)-methyl-GMP + diphosphate + H(+). Functionally, nucleoside triphosphate pyrophosphatase that hydrolyzes 7-methyl-GTP (m(7)GTP). May have a dual role in cell division arrest and in preventing the incorporation of modified nucleotides into cellular nucleic acids. This Saccharophagus degradans (strain 2-40 / ATCC 43961 / DSM 17024) protein is 7-methyl-GTP pyrophosphatase.